We begin with the raw amino-acid sequence, 279 residues long: Inorganic pyrophosphatase 2 (279 aa).

Catalysis depends on Asp-12, which acts as the Nucleophile. The Mg(2+) site is built by Asp-12 and Asp-14. Asp-14 (proton donor) is an active-site residue. The substrate site is built by Asp-23 and Asp-98. Mg(2+) is bound at residue Asp-182.

Belongs to the HAD-like hydrolase superfamily. As to quaternary structure, tetramer. It depends on Mg(2+) as a cofactor.

The enzyme catalyses diphosphate + H2O = 2 phosphate + H(+). Functionally, catalyzes the specific cleavage of pyrophosphate. The polypeptide is Inorganic pyrophosphatase 2 (Arabidopsis thaliana (Mouse-ear cress)).